We begin with the raw amino-acid sequence, 486 residues long: Cardiolipin synthase A (486 aa).

Helical transmembrane passes span 3 to 23 and 38 to 58; these read TFYT…IAGV and MAWL…YLSF. PLD phosphodiesterase domains follow at residues 219 to 246 and 399 to 426; these read MDLR…VDPR and EGGL…DMRS. Catalysis depends on residues His224, Lys226, Asp231, His404, Lys406, and Asp411.

The protein belongs to the phospholipase D family. Cardiolipin synthase subfamily. ClsA sub-subfamily.

It localises to the cell inner membrane. It carries out the reaction 2 a 1,2-diacyl-sn-glycero-3-phospho-(1'-sn-glycerol) = a cardiolipin + glycerol. In terms of biological role, catalyzes the reversible phosphatidyl group transfer from one phosphatidylglycerol molecule to another to form cardiolipin (CL) (diphosphatidylglycerol) and glycerol. The polypeptide is Cardiolipin synthase A (Klebsiella pneumoniae (strain 342)).